Here is a 230-residue protein sequence, read N- to C-terminus: Large ribosomal subunit protein uL1 (230 aa).

Belongs to the universal ribosomal protein uL1 family. In terms of assembly, part of the 50S ribosomal subunit.

Binds directly to 23S rRNA. The L1 stalk is quite mobile in the ribosome, and is involved in E site tRNA release. Its function is as follows. Protein L1 is also a translational repressor protein, it controls the translation of the L11 operon by binding to its mRNA. In Limosilactobacillus fermentum (strain NBRC 3956 / LMG 18251) (Lactobacillus fermentum), this protein is Large ribosomal subunit protein uL1.